We begin with the raw amino-acid sequence, 141 residues long: Large ribosomal subunit protein uL11 (141 aa).

This sequence belongs to the universal ribosomal protein uL11 family. In terms of assembly, part of the ribosomal stalk of the 50S ribosomal subunit. Interacts with L10 and the large rRNA to form the base of the stalk. L10 forms an elongated spine to which L12 dimers bind in a sequential fashion forming a multimeric L10(L12)X complex. One or more lysine residues are methylated.

Forms part of the ribosomal stalk which helps the ribosome interact with GTP-bound translation factors. The sequence is that of Large ribosomal subunit protein uL11 from Geobacillus thermodenitrificans (strain NG80-2).